Consider the following 112-residue polypeptide: MKIVMAIIKPFKLDEVREALTAIGIQGLTVTEVKGYGRQKGHTEIYRGTEYAVSFLPKLKIEIAVASELVDRAVEAIAASAKTGQIGDGKIFVYSIDHAVRIRTGETDSEAL.

O-UMP-tyrosine is present on Tyr-51.

The protein belongs to the P(II) protein family. In terms of assembly, homotrimer.

Functionally, in nitrogen-limiting conditions, when the ratio of Gln to 2-ketoglutarate decreases, P-II is uridylylated to P-II-UMP. P-II-UMP allows the deadenylation of glutamine synthetase (GS), thus activating the enzyme. Conversely, in nitrogen excess P-II is deuridylated and promotes the adenylation of GS. P-II indirectly controls the transcription of the GS gene (glnA). P-II prevents NR-II-catalyzed conversion of NR-I to NR-I-phosphate, the transcriptional activator of glnA. When P-II is uridylylated to P-II-UMP, these events are reversed. In Rhizobium etli (strain ATCC 51251 / DSM 11541 / JCM 21823 / NBRC 15573 / CFN 42), this protein is Nitrogen regulatory protein P-II (glnB).